The chain runs to 148 residues: MKLRQPMPELTGEKAWLNGEVTREQLIGEKPTLIHFWSISCHLCKEAMPQVNEFRDKYQDQLNVVAVHMPRSEDDLDPGKIKETAAEHDITQPIFVDSDHALTDAFENEYVPAYYVFDKTGQLRHFQAGGSGMKMLEKRVNRVLAETE.

The region spanning 2 to 145 is the Thioredoxin domain; that stretch reads KLRQPMPELT…LEKRVNRVLA (144 aa). Cys41 and Cys44 are oxidised to a cystine.

In terms of assembly, monomer.

It localises to the cytoplasm. Its function is as follows. Participates in various redox reactions through the reversible oxidation of its active center dithiol to a disulfide and catalyzes dithiol-disulfide exchange reactions. The polypeptide is Thiol-disulfide oxidoreductase YkuV (ykuV) (Bacillus subtilis (strain 168)).